Here is a 271-residue protein sequence, read N- to C-terminus: Co-chaperone protein DjlA (271 aa).

Residues Met-1–Lys-6 lie on the Periplasmic side of the membrane. A helical membrane pass occupies residues Ile-7–His-31. Over Met-32 to Lys-271 the chain is Cytoplasmic. Residues Asp-205–Lys-271 form the J domain.

As to quaternary structure, homodimer.

The protein localises to the cell inner membrane. Functionally, regulatory DnaK co-chaperone. Direct interaction between DnaK and DjlA is needed for the induction of the wcaABCDE operon, involved in the synthesis of a colanic acid polysaccharide capsule, possibly through activation of the RcsB/RcsC phosphotransfer signaling pathway. The colanic acid capsule may help the bacterium survive conditions outside the host. The sequence is that of Co-chaperone protein DjlA from Escherichia coli O6:H1 (strain CFT073 / ATCC 700928 / UPEC).